Consider the following 301-residue polypeptide: Probable alpha-L-glutamate ligase (301 aa).

The ATP-grasp domain occupies 104-287 (LQLLSRRGIG…VAGMIIEHLE (184 aa)). ATP-binding positions include Lys141, 178–179 (EY), Asp187, and 211–213 (RSN). Positions 248, 260, and 262 each coordinate Mg(2+). 3 residues coordinate Mn(2+): Asp248, Glu260, and Asn262.

Belongs to the RimK family. It depends on Mg(2+) as a cofactor. Requires Mn(2+) as cofactor.

This is Probable alpha-L-glutamate ligase from Pseudomonas putida (strain W619).